Reading from the N-terminus, the 215-residue chain is Adenylate kinase (215 aa).

10-15 lines the ATP pocket; sequence GAGKGT. Residues 30-59 form an NMP region; it reads STGDMLRAAVKAETELGLKAKSVMDSGGLV. AMP-binding positions include threonine 31, arginine 36, 57 to 59, 85 to 88, and glutamine 92; these read GLV and GFPR. The interval 122 to 159 is LID; the sequence is GRRVHEGSGRIYHTIFNPPKVEGIDDVTGEPLLQRKDD. ATP contacts are provided by residues arginine 123 and 132–133; that span reads IY. Arginine 156 and arginine 167 together coordinate AMP. Glycine 201 provides a ligand contact to ATP.

Belongs to the adenylate kinase family. Monomer.

Its subcellular location is the cytoplasm. The enzyme catalyses AMP + ATP = 2 ADP. The protein operates within purine metabolism; AMP biosynthesis via salvage pathway; AMP from ADP: step 1/1. Its function is as follows. Catalyzes the reversible transfer of the terminal phosphate group between ATP and AMP. Plays an important role in cellular energy homeostasis and in adenine nucleotide metabolism. The protein is Adenylate kinase of Pseudomonas syringae pv. syringae (strain B728a).